Reading from the N-terminus, the 754-residue chain is Zinc finger protein with KRAB and SCAN domains 7 (754 aa).

Lys-28 is covalently cross-linked (Glycyl lysine isopeptide (Lys-Gly) (interchain with G-Cter in SUMO2)). The SCAN box domain maps to 54-136; that stretch reads RLHFRQLCYH…AVVEDFQRHL (83 aa). Residues 157–215 form a disordered region; the sequence is TALGTTKESPPTSPLSGGSAPGAHLEPPYDPGTHHLPSGDFAQCTSPVPTLPQVGNSGD. Composition is skewed to polar residues over residues 158-172 and 199-215; these read ALGT…SPLS and QCTS…NSGD. The 76-residue stretch at 231–306 folds into the KRAB domain; it reads VAYEDLSVDY…TSGGLFGVVP (76 aa). 10 consecutive C2H2-type zinc fingers follow at residues 383–405, 411–433, 439–461, 467–489, 495–517, 523–545, 551–573, 579–601, 607–629, and 635–657; these read YRCD…QRIH, YECN…LRTH, YECS…QRLH, YKCN…QRTH, YECN…QVLH, YKCN…QRIH, YECS…QSLH, YKCS…ERIH, and FECS…QRLH. A C2H2-type 11; degenerate zinc finger spans residues 663 to 685; the sequence is YECNECGKVFSYSSSLMVHQRTH. 2 C2H2-type zinc fingers span residues 691–713 and 719–741; these read YKCN…QRVH and YECS…QRTH. The segment at 735–754 is disordered; it reads NHHQRTHTGEKSSGLAWSVS.

It belongs to the krueppel C2H2-type zinc-finger protein family.

The protein localises to the nucleus. In terms of biological role, may be involved in transcriptional regulation. This is Zinc finger protein with KRAB and SCAN domains 7 (ZKSCAN7) from Homo sapiens (Human).